Consider the following 345-residue polypeptide: 3-isopropylmalate dehydrogenase (345 aa).

Position 74–87 (74–87) interacts with NAD(+); sequence GPKWDGLPRKISPE. The substrate site is built by R94, R104, R132, and D217. The Mg(2+) site is built by D217, D241, and D245. 274 to 286 provides a ligand contact to NAD(+); sequence GSAPDIAGKGIAN.

This sequence belongs to the isocitrate and isopropylmalate dehydrogenases family. LeuB type 1 subfamily. As to quaternary structure, homodimer. It depends on Mg(2+) as a cofactor. Requires Mn(2+) as cofactor.

The protein resides in the cytoplasm. The enzyme catalyses (2R,3S)-3-isopropylmalate + NAD(+) = 4-methyl-2-oxopentanoate + CO2 + NADH. The protein operates within amino-acid biosynthesis; L-leucine biosynthesis; L-leucine from 3-methyl-2-oxobutanoate: step 3/4. Catalyzes the oxidation of 3-carboxy-2-hydroxy-4-methylpentanoate (3-isopropylmalate) to 3-carboxy-4-methyl-2-oxopentanoate. The product decarboxylates to 4-methyl-2 oxopentanoate. This Thermus thermophilus protein is 3-isopropylmalate dehydrogenase (leuB).